The following is a 917-amino-acid chain: Major intrinsically disordered Notch2-binding receptor 1 (917 aa).

The Cytoplasmic portion of the chain corresponds to 1–892 (MEANQEASLF…AEFRRAKVCK (892 aa)). Disordered regions lie at residues 337 to 367 (STYF…WPAK), 388 to 410 (PSEE…GPDR), 461 to 483 (SCTS…QHVL), 568 to 588 (ITNG…NVHH), 652 to 687 (SEAP…CSDA), 706 to 727 (TRPS…IASI), and 746 to 783 (NEEE…LPKQ). Residues 461–480 (SCTSGQHSSDTSSVGTQTEQ) show a composition bias toward polar residues. A compositionally biased stretch (basic and acidic residues) spans 576–588 (KGDKCNRPENVHH). S712 carries the phosphoserine modification. The chain crosses the membrane as a helical span at residues 893 to 913 (IAALITAAACTVILVIVVPIC). At 914–917 (TMKS) the chain is on the extracellular side.

It belongs to the MINAR family. As to quaternary structure, interacts with NOTCH2; this interaction increases MINAR1 stability. Interacts (via N-terminus) with DEPTOR (via PDZ domain); this interaction may stabilize DEPTOR protein by impairing its ubiquitination. In terms of tissue distribution, expressed in brain and in islets of Langerhans.

It is found in the cell membrane. Its function is as follows. Intrinsically disordered protein which may negatively regulate mTOR signaling pathway by stabilizing the mTOR complex component DEPTOR. Negatively regulates angiogenesis. Negatively regulates cell growth. Negatively regulates neurite outgrowth in hippocampal neurons. This chain is Major intrinsically disordered Notch2-binding receptor 1 (Minar1), found in Mus musculus (Mouse).